A 66-amino-acid polypeptide reads, in one-letter code: Stress-induced protein KIN1 (66 aa).

Polar residues predominate over residues 1–13; it reads MSETNKNAFQAGQ. Residues 1-52 are disordered; that stretch reads MSETNKNAFQAGQTAGKAEEKSNVLLDKAKDAAAGAGAGAQQAGKSVSDAAA. Basic and acidic residues predominate over residues 17 to 31; it reads KAEEKSNVLLDKAKD. 2 consecutive repeats follow at residues 31–35 and 49–53; these read DAAAG. A compositionally biased stretch (low complexity) spans 32 to 45; it reads AAAGAGAGAQQAGK.

The chain is Stress-induced protein KIN1 (KIN1) from Arabidopsis thaliana (Mouse-ear cress).